We begin with the raw amino-acid sequence, 513 residues long: ATP synthase subunit alpha (513 aa).

ATP is bound at residue 169-176 (GDRQIGKT).

It belongs to the ATPase alpha/beta chains family. As to quaternary structure, F-type ATPases have 2 components, CF(1) - the catalytic core - and CF(0) - the membrane proton channel. CF(1) has five subunits: alpha(3), beta(3), gamma(1), delta(1), epsilon(1). CF(0) has three main subunits: a(1), b(2) and c(9-12). The alpha and beta chains form an alternating ring which encloses part of the gamma chain. CF(1) is attached to CF(0) by a central stalk formed by the gamma and epsilon chains, while a peripheral stalk is formed by the delta and b chains.

Its subcellular location is the cell inner membrane. The catalysed reaction is ATP + H2O + 4 H(+)(in) = ADP + phosphate + 5 H(+)(out). Its function is as follows. Produces ATP from ADP in the presence of a proton gradient across the membrane. The alpha chain is a regulatory subunit. The protein is ATP synthase subunit alpha of Francisella philomiragia subsp. philomiragia (strain ATCC 25017 / CCUG 19701 / FSC 153 / O#319-036).